The chain runs to 87 residues: DNA-directed RNA polymerase subunit omega (87 aa).

It belongs to the RNA polymerase subunit omega family. The RNAP catalytic core consists of 2 alpha, 1 beta, 1 beta' and 1 omega subunit. When a sigma factor is associated with the core the holoenzyme is formed, which can initiate transcription.

It carries out the reaction RNA(n) + a ribonucleoside 5'-triphosphate = RNA(n+1) + diphosphate. Functionally, promotes RNA polymerase assembly. Latches the N- and C-terminal regions of the beta' subunit thereby facilitating its interaction with the beta and alpha subunits. The protein is DNA-directed RNA polymerase subunit omega of Pseudomonas putida (strain W619).